The chain runs to 455 residues: Lysine histidine transporter-like 4 (455 aa).

The Cytoplasmic segment spans residues 1–38; it reads MAGIPDHIQDQHLVEEDQPFDLEDWLPITASRNANWYY. Residues 39–59 form a helical membrane-spanning segment; that stretch reads SAFHNVTAIVGAGVLGLPYAM. Residues 60-61 are Extracellular-facing; it reads SE. A helical membrane pass occupies residues 62–82; it reads LGWGPGVVVLILSWVITLYTL. Residues 83 to 113 are Cytoplasmic-facing; the sequence is WQMIEMHEMFEGQRFDRYHELGQAAFGKKLG. Residues 114–134 traverse the membrane as a helical segment; sequence LYIIVPLQLLVEISVCIVYMV. At 135 to 158 the chain is on the extracellular side; sequence TGGKSLKNVHDLALGDGDKCTKLR. Residues 159 to 179 form a helical membrane-spanning segment; sequence IQHFILIFASSQFVLSLLKNF. The Cytoplasmic portion of the chain corresponds to 180–181; that stretch reads NS. Residues 182-202 form a helical membrane-spanning segment; it reads ISGVSLVAAVMSVSYSTIAWV. Residues 203-226 are Extracellular-facing; it reads ASLRKGATTGSVEYGYRKRTTSVP. The helical transmembrane segment at 227-247 threads the bilayer; that stretch reads LAFLSALGEMAFAYAGHNVVL. Residues 248-267 lie on the Cytoplasmic side of the membrane; sequence EIQATIPSTPENPSKRPMWK. The helical transmembrane segment at 268–288 threads the bilayer; it reads GAVVAYIIVAFCYFPVALVGF. Residues 289–307 are Extracellular-facing; that stretch reads KTFGNSVEESILESLTKPT. The helical transmembrane segment at 308-328 threads the bilayer; that stretch reads ALVIVANMFVVIHLLGSYQVY. At 329–357 the chain is on the cytoplasmic side; it reads AMPVFDMIESVMIRIWHFSPTRVLRFTIR. Residues 358–378 traverse the membrane as a helical segment; sequence WTFVAATMGIAVGLPYYSALL. S379 is a topological domain (extracellular). Residues 380–400 traverse the membrane as a helical segment; it reads FFGGFVFAPTTYFIPCIMWLI. Topologically, residues 401–412 are cytoplasmic; sequence LKKPKRFSLSWC. Residues 413–433 form a helical membrane-spanning segment; sequence MNWFCIIFGLVLMIIAPIGGL. The Extracellular segment spans residues 434 to 455; sequence AKLIYNIQKGTLPNSRCNLPKH.

Belongs to the amino acid/polyamine transporter 2 family. Amino acid/auxin permease (AAAP) (TC 2.A.18.2) subfamily.

It is found in the cell membrane. Its function is as follows. Amino acid transporter. This Arabidopsis thaliana (Mouse-ear cress) protein is Lysine histidine transporter-like 4.